The following is a 968-amino-acid chain: Ribonuclease E (968 aa).

Residues 39 to 119 (SNIYKGKITR…GTKGAALTTF (81 aa)) form the S1 motif domain. Mg(2+) contacts are provided by Asp303 and Asp346. Residues Cys404 and Cys407 each contribute to the Zn(2+) site. A required for zinc-mediated homotetramerization and catalytic activity region spans residues 404–407 (CPRC). The disordered stretch occupies residues 947–968 (IKNSAGAHSATNFSTSPVKKSE). Residues 955 to 968 (SATNFSTSPVKKSE) show a composition bias toward polar residues.

This sequence belongs to the RNase E/G family. RNase E subfamily. As to quaternary structure, component of the RNA degradosome, which is a multiprotein complex involved in RNA processing and mRNA degradation. Within the RNA degradosome, RNase E assembles into a homotetramer formed by a dimer of dimers. The cofactor is Zn(2+). It depends on Mg(2+) as a cofactor.

It localises to the cytoplasm. It is found in the cell inner membrane. The catalysed reaction is Endonucleolytic cleavage of single-stranded RNA in A- and U-rich regions.. In terms of biological role, endoribonuclease that plays a central role in RNA processing and decay. Required for the maturation of 5S and 16S rRNAs and the majority of tRNAs. Also involved in the degradation of most mRNAs. This chain is Ribonuclease E, found in Buchnera aphidicola subsp. Schizaphis graminum (strain Sg).